The sequence spans 746 residues: Histone-lysine N-methyltransferase EZH2 (746 aa).

The interaction with DNMT1, DNMT3A and DNMT3B stretch occupies residues 1–340; that stretch reads MGQTGKKSEK…AKEFAAALTA (340 aa). Serine 21 carries the phosphoserine; by PKB/AKT1 modification. The segment at 39–68 is interaction with EED; sequence KSMFSSNRQKILERTEILNQEWKQRRIQPV. Serine 75 is a glycosylation site (O-linked (GlcNAc) serine). At serine 76 the chain carries Phosphoserine. A disordered region spans residues 180-222; that stretch reads QYNDDDDDDDGDDPEEREEKQKDLEDHRDDKESRPPRKFPSDK. Acidic residues predominate over residues 182-195; sequence NDDDDDDDGDDPEE. Over residues 196 to 222 the composition is skewed to basic and acidic residues; that stretch reads REEKQKDLEDHRDDKESRPPRKFPSDK. The segment at 329 to 522 is interaction with CDYL; that stretch reads EGAKEFAAAL…SSNHVYNYQP (194 aa). Threonine 339 is modified (phosphothreonine). Residues 340–426 form a disordered region; it reads AERIKTPPKR…PIKMKPNIEP (87 aa). At threonine 345 the chain carries Phosphothreonine; by CDK1 and CDK2. Over residues 345 to 357 the composition is skewed to basic residues; that stretch reads TPPKRPGGRRRGR. A phosphoserine mark is found at serine 363 and serine 366. Threonine 367 bears the Phosphothreonine mark. The span at 374-385 shows a compositional bias: basic and acidic residues; that stretch reads ESKDTDSDREAG. Threonine 487 carries the phosphothreonine modification. The region spanning 503 to 605 is the CXC domain; it reads CRKIQLKKDG…SKNVSCKNCS (103 aa). Residues 612-727 enclose the SET domain; sequence KHLLLAPSDV…TGEELFFDYR (116 aa). A Glycyl lysine isopeptide (Lys-Gly) (interchain with G-Cter in SUMO2) cross-link involves residue lysine 634.

Belongs to the class V-like SAM-binding methyltransferase superfamily. Histone-lysine methyltransferase family. EZ subfamily. In terms of assembly, component of the PRC2/EED-EZH2 complex, which includes EED, EZH2, SUZ12, RBBP4 and RBBP7 and possibly AEBP2. The minimum components required for methyltransferase activity of the PRC2/EED-EZH2 complex are EED, EZH2 and SUZ12. The PRC2 complex may also interact with DNMT1, DNMT3A, DNMT3B and PHF1 via the EZH2 subunit and with SIRT1 via the SUZ12 subunit. Interacts with HDAC1 and HDAC2. Binds ATRX via the SET domain. Interacts with PRAME. Interacts with CDYL. Interacts with BMAL1, CLOCK and CRY1. Interacts with DNMT3L; the interaction is direct. Interacts with EZHIP; the interaction blocks EZH2 methyltransferase activity. Interacts with ZNF263; recruited to the SIX3 promoter along with other proteins involved in chromatin modification and transcriptional corepression where it contributes to transcriptional repression. Interacts with ARMC12. Interacts with ZMYND8; the interaction is dependent on the presence of chromatin. Interacts with DDX18; this interaction inhibits the PRC2 complex. Phosphorylated by AKT1. Phosphorylation by AKT1 reduces methyltransferase activity. Phosphorylation at Thr-345 by CDK1 and CDK2 promotes maintenance of H3K27me3 levels at EZH2-target loci, thus leading to epigenetic gene silencing. Post-translationally, sumoylated. In terms of processing, glycosylated: O-GlcNAcylation at Ser-75 by OGT increases stability of EZH2 and facilitates the formation of H3K27me3 by the PRC2/EED-EZH2 complex.

It is found in the nucleus. It carries out the reaction L-lysyl(27)-[histone H3] + 3 S-adenosyl-L-methionine = N(6),N(6),N(6)-trimethyl-L-lysyl(27)-[histone H3] + 3 S-adenosyl-L-homocysteine + 3 H(+). Polycomb group (PcG) protein. Catalytic subunit of the PRC2/EED-EZH2 complex, which methylates 'Lys-9' (H3K9me) and 'Lys-27' (H3K27me) of histone H3, leading to transcriptional repression of the affected target gene. Able to mono-, di- and trimethylate 'Lys-27' of histone H3 to form H3K27me1, H3K27me2 and H3K27me3, respectively. Displays a preference for substrates with less methylation, loses activity when progressively more methyl groups are incorporated into H3K27, H3K27me0 &gt; H3K27me1 &gt; H3K27me2. Compared to EZH1-containing complexes, it is more abundant in embryonic stem cells and plays a major role in forming H3K27me3, which is required for embryonic stem cell identity and proper differentiation. The PRC2/EED-EZH2 complex may also serve as a recruiting platform for DNA methyltransferases, thereby linking two epigenetic repression systems. EZH2 can also methylate non-histone proteins such as the transcription factor GATA4 and the nuclear receptor RORA. Regulates the circadian clock via histone methylation at the promoter of the circadian genes. Essential for the CRY1/2-mediated repression of the CLOCK-BMAL1 transcriptional activation of PER1/2. Involved in the di and trimethylation of 'Lys-27' of histone H3 on PER1/2 promoters which is necessary for the CRY1/2 proteins to inhibit transcription. The protein is Histone-lysine N-methyltransferase EZH2 (EZH2) of Macaca fascicularis (Crab-eating macaque).